The chain runs to 217 residues: Somatotropin (217 aa).

A signal peptide spans 1 to 26 (MAAGSRTSLLLAFALLCLPWLQEGSA). Histidine 44 contacts Zn(2+). Cysteine 79 and cysteine 191 are joined by a disulfide. Serine 132 carries the post-translational modification Phosphoserine. Glutamate 200 lines the Zn(2+) pocket. Residues cysteine 208 and cysteine 215 are joined by a disulfide bond.

This sequence belongs to the somatotropin/prolactin family.

Its subcellular location is the secreted. Its function is as follows. Plays an important role in growth control. Its major role in stimulating body growth is to stimulate the liver and other tissues to secrete IGF1. It stimulates both the differentiation and proliferation of myoblasts. It also stimulates amino acid uptake and protein synthesis in muscle and other tissues. This is Somatotropin (GH1) from Macaca mulatta (Rhesus macaque).